A 107-amino-acid chain; its full sequence is MTTEIKKLDPDTAIDIAYDIFLEMAGENLDPADILLFNLQFEERGGVEFVETADDWEEEIGVLIDPEEYAEVWVGLVNEQDEMDDVFAKFLISHREEDREFHVIWKK.

It belongs to the putative dsDNA mimic protein family. As to quaternary structure, monomer in solution. Interacts with the DNA-binding protein HU.

In terms of biological role, may act as a double-stranded DNA (dsDNA) mimic. Probably regulates the activity of the DNA-binding protein HU. This chain is Putative double-stranded DNA mimic protein HI_1450, found in Haemophilus influenzae (strain ATCC 51907 / DSM 11121 / KW20 / Rd).